The sequence spans 327 residues: Aspartate carbamoyltransferase catalytic subunit (327 aa).

Residues Arg-67 and Thr-68 each contribute to the carbamoyl phosphate site. Lys-95 is an L-aspartate binding site. Carbamoyl phosphate-binding residues include Arg-117, His-145, and Gln-148. L-aspartate is bound by residues Arg-178 and Arg-232. Residues Gly-273 and Pro-274 each coordinate carbamoyl phosphate.

Belongs to the aspartate/ornithine carbamoyltransferase superfamily. ATCase family. Heterododecamer (2C3:3R2) of six catalytic PyrB chains organized as two trimers (C3), and six regulatory PyrI chains organized as three dimers (R2).

The catalysed reaction is carbamoyl phosphate + L-aspartate = N-carbamoyl-L-aspartate + phosphate + H(+). It functions in the pathway pyrimidine metabolism; UMP biosynthesis via de novo pathway; (S)-dihydroorotate from bicarbonate: step 2/3. In terms of biological role, catalyzes the condensation of carbamoyl phosphate and aspartate to form carbamoyl aspartate and inorganic phosphate, the committed step in the de novo pyrimidine nucleotide biosynthesis pathway. The sequence is that of Aspartate carbamoyltransferase catalytic subunit from Parvibaculum lavamentivorans (strain DS-1 / DSM 13023 / NCIMB 13966).